A 216-amino-acid chain; its full sequence is uncharacterized protein (216 aa).

The next 4 membrane-spanning stretches (helical) occupy residues 5-27 (ISLILVIIFPYISLGLSARIAFS), 98-120 (FLSFFFPSVYVLSIIWIAGVFLL), 125-147 (VLIWSGIFNSLLLLFLGILTFTN), and 185-207 (GTLFVAILSFLFGILVLFTGILG).

Its subcellular location is the cell membrane. This is an uncharacterized protein from Aquifex aeolicus (strain VF5).